The chain runs to 285 residues: UDP-3-O-acyl-N-acetylglucosamine deacetylase (285 aa).

Zn(2+)-binding residues include H89, H243, and D247. The Proton donor role is filled by H270.

Belongs to the LpxC family. Zn(2+) serves as cofactor.

It carries out the reaction a UDP-3-O-[(3R)-3-hydroxyacyl]-N-acetyl-alpha-D-glucosamine + H2O = a UDP-3-O-[(3R)-3-hydroxyacyl]-alpha-D-glucosamine + acetate. Its pathway is glycolipid biosynthesis; lipid IV(A) biosynthesis; lipid IV(A) from (3R)-3-hydroxytetradecanoyl-[acyl-carrier-protein] and UDP-N-acetyl-alpha-D-glucosamine: step 2/6. Catalyzes the hydrolysis of UDP-3-O-myristoyl-N-acetylglucosamine to form UDP-3-O-myristoylglucosamine and acetate, the committed step in lipid A biosynthesis. This Thermosynechococcus vestitus (strain NIES-2133 / IAM M-273 / BP-1) protein is UDP-3-O-acyl-N-acetylglucosamine deacetylase.